The sequence spans 318 residues: MYNYLDFEKPVADLDVQILELKKIAQEKGSLDMSDEIARLEMRSQTALRDLYKKLSPWQKTQVARHPDRPHFMDYSAQLLRDVTPLAGDRKFAEDEAIQAGFARFKGEAIAYIGQEKGHDTQTRLRYNFGSARPEGYRKAVRIMELADRFGLPLLTFVDTAGAYPGVSAEERGQAEAIAQSTAATLRLRVPVVSVIIGEGGSGGAIAIAAANKVYMLEHSIYSVISPEGAASILWRDPARAKDAATNMQITAQDLYRLKIIDGIIPEPLGGAHRQKEAAIEAAGDGIAAALKSMIGKDGETIKQERWDKYLQIGRSLA.

The CoA carboxyltransferase C-terminal domain occupies 43 to 293; the sequence is RSQTALRDLY…GDGIAAALKS (251 aa).

This sequence belongs to the AccA family. As to quaternary structure, acetyl-CoA carboxylase is a heterohexamer composed of biotin carboxyl carrier protein (AccB), biotin carboxylase (AccC) and two subunits each of ACCase subunit alpha (AccA) and ACCase subunit beta (AccD).

The protein localises to the cytoplasm. The catalysed reaction is N(6)-carboxybiotinyl-L-lysyl-[protein] + acetyl-CoA = N(6)-biotinyl-L-lysyl-[protein] + malonyl-CoA. The protein operates within lipid metabolism; malonyl-CoA biosynthesis; malonyl-CoA from acetyl-CoA: step 1/1. Its function is as follows. Component of the acetyl coenzyme A carboxylase (ACC) complex. First, biotin carboxylase catalyzes the carboxylation of biotin on its carrier protein (BCCP) and then the CO(2) group is transferred by the carboxyltransferase to acetyl-CoA to form malonyl-CoA. This chain is Acetyl-coenzyme A carboxylase carboxyl transferase subunit alpha, found in Bartonella bacilliformis (strain ATCC 35685 / KC583 / Herrer 020/F12,63).